The chain runs to 464 residues: Protein btn-1 (464 aa).

The N-terminal stretch at 1 to 22 (MNRSPSSSGLLPLPGAPSSSWA) is a signal peptide. 10 helical membrane-spanning segments follow: residues 38-58 (AVFI…VIIL), 73-93 (VVLL…PYFI), 102-122 (IFIF…TPPS), 129-149 (LIGV…FLGL), 167-187 (GAGL…GLSV), 190-210 (SLLA…LILP), 288-308 (SLFF…YTIN), 332-352 (PFYG…IAFI), 354-374 (IHHL…LTLH), and 376-396 (LLNF…EGLL).

The protein belongs to the battenin family.

Its subcellular location is the vacuole membrane. Involved in vacuolar transport and vacuole pH homeostasis. Also required for cytokinesis. This is Protein btn-1 (cln3) from Neurospora crassa (strain ATCC 24698 / 74-OR23-1A / CBS 708.71 / DSM 1257 / FGSC 987).